Reading from the N-terminus, the 62-residue chain is Photosystem II reaction center protein Z (62 aa).

A run of 2 helical transmembrane segments spans residues 8–28 (ALAA…VAYA) and 41–61 (FLGS…NFLV).

This sequence belongs to the PsbZ family. PSII is composed of 1 copy each of membrane proteins PsbA, PsbB, PsbC, PsbD, PsbE, PsbF, PsbH, PsbI, PsbJ, PsbK, PsbL, PsbM, PsbT, PsbX, PsbY, PsbZ, Psb30/Ycf12, peripheral proteins PsbO, CyanoQ (PsbQ), PsbU, PsbV and a large number of cofactors. It forms dimeric complexes.

Its subcellular location is the cellular thylakoid membrane. In terms of biological role, may control the interaction of photosystem II (PSII) cores with the light-harvesting antenna, regulates electron flow through the 2 photosystem reaction centers. PSII is a light-driven water plastoquinone oxidoreductase, using light energy to abstract electrons from H(2)O, generating a proton gradient subsequently used for ATP formation. This Cyanothece sp. (strain PCC 7425 / ATCC 29141) protein is Photosystem II reaction center protein Z.